The chain runs to 136 residues: Late embryogenesis abundant protein D-7 (136 aa).

2 disordered regions span residues 1–108 (MASH…AQGA) and 117–136 (GMAD…TRKD). The span at 11-58 (GRAEGRAHEKGEQMKESMKEKAEAAKQKTMETAEAAKQKTMETAEAAK) shows a compositional bias: basic and acidic residues. LEA 11-mer repeat repeat units follow at residues 31–41 (KAEAAKQKTME), 42–52 (TAEAAKQKTME), 53–63 (TAEAAKQKTRG), 64–74 (AAETTNDKTKQ), and 75–85 (TAGAARGKAEE).

This sequence belongs to the LEA type 4 family.

Its function is as follows. LEA proteins are late embryonic proteins abundant in higher plant seed embryos. There are two subsets of LEA proteins (5a and 5b), the first ones are expressed when the cotyledon weight reach 80 mg and the second set are expressed above 100 mg. The function of those proteins is not known. This is Late embryogenesis abundant protein D-7 from Gossypium hirsutum (Upland cotton).